The chain runs to 392 residues: Stilbene synthase 4 (392 aa).

Residue 55–58 coordinates substrate; that stretch reads KFNR. Cysteine 164 is an active-site residue. Substrate contacts are provided by residues leucine 267 and 305 to 307; that span reads GGP.

Belongs to the thiolase-like superfamily. Chalcone/stilbene synthases family. As to quaternary structure, homodimer.

It localises to the cytoplasm. The catalysed reaction is 4-coumaroyl-CoA + 3 malonyl-CoA + 3 H(+) = trans-resveratrol + 4 CO2 + 4 CoA. It functions in the pathway phytoalexin biosynthesis; 3,4',5-trihydroxystilbene biosynthesis; 3,4',5-trihydroxystilbene from trans-4-coumarate: step 2/2. Its function is as follows. Mediates resistance to pathogens which are sensitive to stilbenes. This chain is Stilbene synthase 4, found in Vitis vinifera (Grape).